Consider the following 124-residue polypeptide: Small ribosomal subunit protein uS13 (124 aa).

Positions 95–124 are disordered; the sequence is GLPVRGQRTKTNARTRKGPKRTIAGKKKAR.

Belongs to the universal ribosomal protein uS13 family. In terms of assembly, part of the 30S ribosomal subunit. Forms a loose heterodimer with protein S19. Forms two bridges to the 50S subunit in the 70S ribosome.

In terms of biological role, located at the top of the head of the 30S subunit, it contacts several helices of the 16S rRNA. In the 70S ribosome it contacts the 23S rRNA (bridge B1a) and protein L5 of the 50S subunit (bridge B1b), connecting the 2 subunits; these bridges are implicated in subunit movement. Contacts the tRNAs in the A and P-sites. This Mycolicibacterium smegmatis (strain ATCC 700084 / mc(2)155) (Mycobacterium smegmatis) protein is Small ribosomal subunit protein uS13.